Here is a 791-residue protein sequence, read N- to C-terminus: MNAHSKEMAPLMGKRTTAPGGNPVVLTEKRPADLTPTKKSAHFFLEIEGFEPNPTVTKTSPPIFSKPMDSNIRQCLSGNCDDMDSPQSPQDDVTETPSNPNSPSANLAKEEQRQKKKRLKKRIFAAVSEGCVEELRELLQDLQDLCRRRRGLDVPDFLMHKLTASDTGKTCLMKALLNINPNTKEIVRILLAFAEENDILDRFINAEYTEEAYEGQTALNIAIERRQGDITAVLIAAGADVNAHAKGVFFNPKYQHEGFYFGETPLALAACTNQPEIVQLLMENEQTDITSQDSRGNNILHALVTVAEDFKTQNDFVKRMYDMILLRSGNWELETMRNNDGLTPLQLAAKMGKAEILKYILSREIKEKPLRSLSRKFTDWAYGPVSSSLYDLTNVDTTTDNSVLEIIVYNTNIDNRHEMLTLEPLHTLLHTKWKKFAKYMFFLSFCFYFFYNITLTLVSYYRPREDEDLPHPLALTHKMSWLQLLGRMFVLIWATCISVKEGIAIFLLRPSDLQSILSDAWFHFVFFVQAVLVILSVFLYLFAYKEYLACLVLAMALGWANMLYYTRGFQSMGMYSVMIQKVILHDVLKFLFVYILFLLGFGVALASLIEKCSKDKKDCSSYGSFSDAVLELFKLTIGLGDLNIQQNSTYPILFLFLLITYVILTFVLLLNMLIALMGETVENVSKESERIWRLQRARTILEFEKMLPEWLRSRFRMGELCKVADEDFRLCLRINEVKWTEWKTHVSFLNEDPGPIRRTADLNKIQDSSRSNSKTTLYAFDELDEFPETSV.

Disordered stretches follow at residues 1-37 (MNAHSKEMAPLMGKRTTAPGGNPVVLTEKRPADLTPT), 52-71 (PNPTVTKTSPPIFSKPMDSN), and 76-113 (LSGNCDDMDSPQSPQDDVTETPSNPNSPSANLAKEEQR). Residues 1 to 430 (MNAHSKEMAP…TLEPLHTLLH (430 aa)) are Cytoplasmic-facing. Residues 95–105 (ETPSNPNSPSA) are compositionally biased toward polar residues. ANK repeat units follow at residues 117–148 (KRLKKRIFAAVSEGCVEELRELLQDLQDLCRR), 170–198 (TCLMKALLNINPNTKEIVRILLAFAEEND), 214–243 (EGQTALNIAIERRQGDITAVLIAAGADVNA), 261–291 (FGETPLALAACTNQPEIVQLLMENEQTDITS), 298–330 (NILHALVTVAEDFKTQNDFVKRMYDMILLRSGN), 340–362 (DGLTPLQLAAKMGKAEILKYILS), and 398–420 (TTDNSVLEIIVYNTNIDNRHEML). Residues 431 to 460 (TKWKKFAKYMFFLSFCFYFFYNITLTLVSY) form a helical membrane-spanning segment. The Extracellular segment spans residues 461-479 (YRPREDEDLPHPLALTHKM). A helical membrane pass occupies residues 480–508 (SWLQLLGRMFVLIWATCISVKEGIAIFLL). Residues 509 to 519 (RPSDLQSILSD) are Cytoplasmic-facing. A helical transmembrane segment spans residues 520 to 540 (AWFHFVFFVQAVLVILSVFLY). Residues 541–545 (LFAYK) lie on the Extracellular side of the membrane. A helical membrane pass occupies residues 546-566 (EYLACLVLAMALGWANMLYYT). At 567-569 (RGF) the chain is on the cytoplasmic side. A helical transmembrane segment spans residues 570 to 608 (QSMGMYSVMIQKVILHDVLKFLFVYILFLLGFGVALASL). Topologically, residues 609–620 (IEKCSKDKKDCS) are extracellular. The pore-forming intramembrane region spans 621-646 (SYGSFSDAVLELFKLTIGLGDLNIQQ). Position 638 (Gly638) interacts with Na(+). At 647 to 649 (NST) the chain is on the extracellular side. Residues 650–686 (YPILFLFLLITYVILTFVLLLNMLIALMGETVENVSK) form a helical membrane-spanning segment. Residues 687–791 (ESERIWRLQR…ELDEFPETSV (105 aa)) are Cytoplasmic-facing.

The protein belongs to the transient receptor (TC 1.A.4) family. TrpV subfamily. TRPV3 sub-subfamily. As to quaternary structure, homotetramer. May convert from a homotetramer to a homopentamer to allow pore dilation. Interacts with TRPV1; may form a heteromeric channel with TRPV1. Interacts with SNX11; this interaction promotes TRPV3 trafficking from the cell membrane to lysosome for degradation. Expressed in keratinocytes and hair follicles.

The protein resides in the cell membrane. The protein localises to the cytoplasm. It is found in the lysosome. The catalysed reaction is Ca(2+)(in) = Ca(2+)(out). It catalyses the reaction Mg(2+)(in) = Mg(2+)(out). The enzyme catalyses Na(+)(in) = Na(+)(out). It carries out the reaction K(+)(in) = K(+)(out). With respect to regulation, activated by cannabinoid that binds to the vanilloid binding pocket. Diphenylboronic anhydride induces pore dilation and enhances cation permeability by promoting the conversion to a homopentamer. Its function is as follows. Non-selective calcium permeant cation channel. It is activated by innocuous (warm) temperatures and shows an increased response at noxious temperatures greater than 39 degrees Celsius. Activation exhibits an outward rectification. The channel pore can dilate to provide permeability to larger cations. May associate with TRPV1 and may modulate its activity. Is a negative regulator of hair growth and cycling: TRPV3-coupled signaling suppresses keratinocyte proliferation in hair follicles and induces apoptosis and premature hair follicle regression (catagen). In Mus musculus (Mouse), this protein is Transient receptor potential cation channel subfamily V member 3 (Trpv3).